Consider the following 137-residue polypeptide: Basic phospholipase A2 homolog W6D49 (137 aa).

Positions 1–16 (MRTLWILAVLLVSVDG) are cleaved as a signal peptide. 7 disulfides stabilise this stretch: cysteine 42/cysteine 131, cysteine 44/cysteine 60, cysteine 59/cysteine 111, cysteine 65/cysteine 137, cysteine 66/cysteine 104, cysteine 73/cysteine 97, and cysteine 91/cysteine 102. The tract at residues 121-133 (KKQQFNTGIFCSK) is important for membrane-damaging activities in eukaryotes and bacteria; heparin-binding.

In terms of assembly, monomer. In terms of tissue distribution, expressed by the venom gland.

The protein resides in the secreted. With respect to regulation, heparin reduces its edema-inducing activity. Its function is as follows. Snake venom phospholipase A2 homolog that lacks enzymatic activity. Shows myotoxin activities and displays edema-inducing activities. A model of myotoxic mechanism has been proposed: an apo Lys49-PLA2 is activated by the entrance of a hydrophobic molecule (e.g. fatty acid) at the hydrophobic channel of the protein leading to a reorientation of a monomer. This reorientation causes a transition between 'inactive' to 'active' states, causing alignment of C-terminal and membrane-docking sites (MDoS) side-by-side and putting the membrane-disruption sites (MDiS) in the same plane, exposed to solvent and in a symmetric position for both monomers. The MDoS region stabilizes the toxin on membrane by the interaction of charged residues with phospholipid head groups. Subsequently, the MDiS region destabilizes the membrane with penetration of hydrophobic residues. This insertion causes a disorganization of the membrane, allowing an uncontrolled influx of ions (i.e. calcium and sodium), and eventually triggering irreversible intracellular alterations and cell death. This chain is Basic phospholipase A2 homolog W6D49, found in Calloselasma rhodostoma (Malayan pit viper).